A 236-amino-acid chain; its full sequence is 2,3,4,5-tetrahydropyridine-2,6-dicarboxylate N-acetyltransferase (236 aa).

The protein belongs to the transferase hexapeptide repeat family. DapH subfamily.

The catalysed reaction is (S)-2,3,4,5-tetrahydrodipicolinate + acetyl-CoA + H2O = L-2-acetamido-6-oxoheptanedioate + CoA. It functions in the pathway amino-acid biosynthesis; L-lysine biosynthesis via DAP pathway; LL-2,6-diaminopimelate from (S)-tetrahydrodipicolinate (acetylase route): step 1/3. Catalyzes the transfer of an acetyl group from acetyl-CoA to tetrahydrodipicolinate. This is 2,3,4,5-tetrahydropyridine-2,6-dicarboxylate N-acetyltransferase from Clostridium botulinum (strain Langeland / NCTC 10281 / Type F).